The primary structure comprises 223 residues: MRVHLGGLAGAAALTGALSFVLLAAAIGTDFWYIIDTERLERTGPGAQDLLGSINRSQPEPLSSHSGLWRTCRVQSPCTPLMNPFRLENVTVSESSRQLLTMHGTFVILLPLSLILMVFGGMTGFLSFLLQAYLLLLLTGILFLFGAMVTLAGISVYIAYSAAAFREALCLLEEKALLDQVDISFGWSLALGWISFIAELLTGAAFLAAARELSLRRRQDQAI.

Residues glycine 7–isoleucine 27 traverse the membrane as a helical segment. Asparagine 55 and asparagine 89 each carry an N-linked (GlcNAc...) asparagine glycan. 3 consecutive transmembrane segments (helical) span residues phenylalanine 106 to leucine 126, leucine 134 to isoleucine 154, and leucine 189 to alanine 209.

It belongs to the PMP-22/EMP/MP20 family.

It is found in the cell junction. Its subcellular location is the tight junction. The protein resides in the lateral cell membrane. It localises to the apical cell membrane. The chain is Transmembrane protein 114 from Homo sapiens (Human).